A 520-amino-acid chain; its full sequence is GMP synthase [glutamine-hydrolyzing] (520 aa).

The Glutamine amidotransferase type-1 domain occupies 12 to 205 (KIIVLDYGSQ…AISICGARGD (194 aa)). Cysteine 89 (nucleophile) is an active-site residue. Active-site residues include histidine 179 and glutamate 181. A GMPS ATP-PPase domain is found at 206–395 (WSMDNFIDME…LGMPEEIVWR (190 aa)). 233–239 (SGGVDSS) contacts ATP.

In terms of assembly, homodimer.

It carries out the reaction XMP + L-glutamine + ATP + H2O = GMP + L-glutamate + AMP + diphosphate + 2 H(+). Its pathway is purine metabolism; GMP biosynthesis; GMP from XMP (L-Gln route): step 1/1. Functionally, catalyzes the synthesis of GMP from XMP. This chain is GMP synthase [glutamine-hydrolyzing], found in Streptococcus pyogenes serotype M2 (strain MGAS10270).